The primary structure comprises 426 residues: 3-phosphoshikimate 1-carboxyvinyltransferase (426 aa).

3-phosphoshikimate contacts are provided by K22, S23, and R27. Position 22 (K22) interacts with phosphoenolpyruvate. Phosphoenolpyruvate contacts are provided by G96 and R124. 3-phosphoshikimate is bound by residues S170, S171, Q172, S198, D314, N337, and K341. Q172 contacts phosphoenolpyruvate. D314 functions as the Proton acceptor in the catalytic mechanism. Phosphoenolpyruvate is bound by residues R345, R387, and K412.

The protein belongs to the EPSP synthase family. As to quaternary structure, monomer.

It localises to the cytoplasm. It catalyses the reaction 3-phosphoshikimate + phosphoenolpyruvate = 5-O-(1-carboxyvinyl)-3-phosphoshikimate + phosphate. It functions in the pathway metabolic intermediate biosynthesis; chorismate biosynthesis; chorismate from D-erythrose 4-phosphate and phosphoenolpyruvate: step 6/7. Catalyzes the transfer of the enolpyruvyl moiety of phosphoenolpyruvate (PEP) to the 5-hydroxyl of shikimate-3-phosphate (S3P) to produce enolpyruvyl shikimate-3-phosphate and inorganic phosphate. This is 3-phosphoshikimate 1-carboxyvinyltransferase from Aliivibrio fischeri (strain ATCC 700601 / ES114) (Vibrio fischeri).